A 372-amino-acid chain; its full sequence is Beta-1,4-galactosyltransferase 2 (372 aa).

Residues 1-15 (MSRLLGGTLERVCKA) lie on the Cytoplasmic side of the membrane. The helical; Signal-anchor for type II membrane protein transmembrane segment at 16-36 (VLLLCLLHFLVAVILYFDVYA) threads the bilayer. The Lumenal segment spans residues 37–372 (QHLAFFSRFS…GRPPSWPPRG (336 aa)). The disordered stretch occupies residues 56–97 (PAASSSSSSSNCSRPNATASSSGLPEVPSALPGPTAPTLPPC). Asn-66 and Asn-71 each carry an N-linked (GlcNAc...) asparagine glycan. Positions 66-78 (NCSRPNATASSSG) are enriched in polar residues. A disulfide bridge links Cys-97 with Cys-139. UDP-alpha-D-galactose is bound by residues 150–154 (PFRHR), 189–191 (FNR), 217–218 (VD), and Trp-278. A disulfide bridge links Cys-211 with Cys-230. Asp-218 serves as a coordination point for Mn(2+). 280–283 (GEDD) is an N-acetyl-D-glucosamine binding site. Mn(2+) is bound at residue His-311. Residue 311-313 (HDR) participates in UDP-alpha-D-galactose binding. Arg-323 lines the N-acetyl-D-glucosamine pocket. Asn-357 carries N-linked (GlcNAc...) asparagine glycosylation.

Belongs to the glycosyltransferase 7 family. It depends on Mn(2+) as a cofactor. Weakly expressed in various tissues. Highest expression in prostate, testis, ovary, intestine, muscle, and in fetal brain.

It localises to the golgi apparatus. It is found in the golgi stack membrane. The enzyme catalyses D-glucose + UDP-alpha-D-galactose = lactose + UDP + H(+). It catalyses the reaction an N-acetyl-beta-D-glucosaminyl derivative + UDP-alpha-D-galactose = a beta-D-galactosyl-(1-&gt;4)-N-acetyl-beta-D-glucosaminyl derivative + UDP + H(+). The catalysed reaction is N-acetyl-D-glucosamine + UDP-alpha-D-galactose = beta-D-galactosyl-(1-&gt;4)-N-acetyl-D-glucosamine + UDP + H(+). Its pathway is protein modification; protein glycosylation. Functionally, responsible for the synthesis of complex-type N-linked oligosaccharides in many glycoproteins as well as the carbohydrate moieties of glycolipids. Can produce lactose. The protein is Beta-1,4-galactosyltransferase 2 of Homo sapiens (Human).